A 271-amino-acid chain; its full sequence is 39kDa core protein OPG130 (271 aa).

Disordered regions lie at residues 80 to 101 (PLQVPTPAPTPKPRQQQTNTSS) and 140 to 180 (KDQK…TPPQ). The span at 92-101 (PRQQQTNTSS) shows a compositional bias: polar residues. Positions 144–165 (TTTTPSTQPSQTLPTTTCTQQS) are enriched in low complexity.

The protein belongs to the orthopoxvirus OPG130 family. As to quaternary structure, interacts with OPG136 and its cleaved form. Post-translationally, its phosphorylation state is regulated by the OPG054 kinase and the OPG106 phosphatase.

Its subcellular location is the virion. The protein resides in the host endoplasmic reticulum-Golgi intermediate compartment membrane. Component of the virion core. Participates in virion assembly. The protein is 39kDa core protein OPG130 (OPG130) of Homo sapiens (Human).